A 903-amino-acid polypeptide reads, in one-letter code: Dual 3',5'-cyclic-AMP and -GMP phosphodiesterase 11A (903 aa).

GAF domains are found at residues 175 to 324 and 356 to 512; these read DLTS…GIAI and DLEK…GLGI. Ser378 provides a ligand contact to 3',5'-cyclic GMP. The 325-residue stretch at 542–866 folds into the PDEase domain; the sequence is SKTEVDKFKA…VKWEELDKKR (325 aa). His618 (proton donor) is an active-site residue. Positions 622, 658, 659, and 770 each coordinate a divalent metal cation. Residues 863 to 903 form a disordered region; that stretch reads DKKRQHDHGASVPASPCSAAEGSETGGVPCCSNNTPPTHVS. Residues 893–903 show a composition bias toward polar residues; sequence CSNNTPPTHVS.

This sequence belongs to the cyclic nucleotide phosphodiesterase family. A divalent metal cation is required as a cofactor.

It localises to the cytoplasm. The protein localises to the cytosol. It catalyses the reaction 3',5'-cyclic GMP + H2O = GMP + H(+). The enzyme catalyses 3',5'-cyclic AMP + H2O = AMP + H(+). Its function is as follows. Plays a role in signal transduction by regulating the intracellular concentration of cyclic nucleotides cAMP and cGMP. Catalyzes the hydrolysis of both cAMP and cGMP to 5'-AMP and 5'-GMP, respectively. The chain is Dual 3',5'-cyclic-AMP and -GMP phosphodiesterase 11A (pde11a) from Takifugu rubripes (Japanese pufferfish).